The chain runs to 496 residues: UDP-N-acetylmuramoyl-L-alanyl-D-glutamate--2,6-diaminopimelate ligase (496 aa).

Leu24 and Ser26 together coordinate UDP-N-acetyl-alpha-D-muramoyl-L-alanyl-D-glutamate. An ATP-binding site is contributed by 109–115 (GTNGKTS). Residues 151–152 (TT), Ser178, Gln184, and Arg186 each bind UDP-N-acetyl-alpha-D-muramoyl-L-alanyl-D-glutamate. N6-carboxylysine is present on Lys218. Residues Arg387, 411-414 (DNPR), Gly462, and Glu466 contribute to the meso-2,6-diaminopimelate site. The Meso-diaminopimelate recognition motif motif lies at 411 to 414 (DNPR).

This sequence belongs to the MurCDEF family. MurE subfamily. The cofactor is Mg(2+). Post-translationally, carboxylation is probably crucial for Mg(2+) binding and, consequently, for the gamma-phosphate positioning of ATP.

It is found in the cytoplasm. The enzyme catalyses UDP-N-acetyl-alpha-D-muramoyl-L-alanyl-D-glutamate + meso-2,6-diaminopimelate + ATP = UDP-N-acetyl-alpha-D-muramoyl-L-alanyl-gamma-D-glutamyl-meso-2,6-diaminopimelate + ADP + phosphate + H(+). The protein operates within cell wall biogenesis; peptidoglycan biosynthesis. Its function is as follows. Catalyzes the addition of meso-diaminopimelic acid to the nucleotide precursor UDP-N-acetylmuramoyl-L-alanyl-D-glutamate (UMAG) in the biosynthesis of bacterial cell-wall peptidoglycan. The sequence is that of UDP-N-acetylmuramoyl-L-alanyl-D-glutamate--2,6-diaminopimelate ligase from Pseudomonas putida (strain ATCC 47054 / DSM 6125 / CFBP 8728 / NCIMB 11950 / KT2440).